Here is a 383-residue protein sequence, read N- to C-terminus: Cytochrome b (383 aa).

4 helical membrane-spanning segments follow: residues 30–50, 74–96, 109–129, and 175–195; these read FGSL…LLAM, WILR…CHIG, TWIV…IGYV, and FFSL…AHLL. Heme b-binding residues include histidine 80 and histidine 94. Heme b-binding residues include histidine 179 and histidine 193. Residue histidine 198 participates in a ubiquinone binding. 4 helical membrane-spanning segments follow: residues 221-241, 289-309, 320-340, and 345-365; these read FTIK…IIGI, GVLA…LDRS, AKFF…IGSA, and EPYV…FLVL.

The protein belongs to the cytochrome b family. In terms of assembly, the main subunits of complex b-c1 are: cytochrome b, cytochrome c1 and the Rieske protein. Heme b serves as cofactor.

Its subcellular location is the mitochondrion inner membrane. In terms of biological role, component of the ubiquinol-cytochrome c reductase complex (complex III or cytochrome b-c1 complex) that is part of the mitochondrial respiratory chain. The b-c1 complex mediates electron transfer from ubiquinol to cytochrome c. Contributes to the generation of a proton gradient across the mitochondrial membrane that is then used for ATP synthesis. In Trichoplax adhaerens (Trichoplax reptans), this protein is Cytochrome b (mt:Cyt-b).